The following is a 647-amino-acid chain: Methyl-accepting chemotaxis protein McpK (647 aa).

Topologically, residues 1-16 (MYDWWVLQLAKLSVSR) are cytoplasmic. A helical membrane pass occupies residues 17-37 (KLMVGFGVLLALLLLVVISSN). At 38–291 (RTLTHQTALS…LRESTASRDR (254 aa)) the chain is on the periplasmic side. Residues 45-287 (ALSEQLAEVA…AGRQLRESTA (243 aa)) enclose the HBM domain. Residues 292 to 312 (ASLWLIAALALAFGCVAGWAI) form a helical membrane-spanning segment. The Cytoplasmic segment spans residues 313-647 (NRQIVRPLDE…LQAQVGRFRL (335 aa)). An HAMP domain is found at 314–370 (RQIVRPLDEALAQAEAIAAGDLGKRPQNPLTLQRRDELGQLQRVMQRMGDSLRELVG). In terms of domain architecture, Methyl-accepting transducer spans 375 to 611 (GVSQLASSAE…EINRSVLSVR (237 aa)).

This sequence belongs to the methyl-accepting chemotaxis (MCP) protein family. In terms of assembly, ligand free ligand-binding domain (LBD) is present in a monomer-dimer equilibrium. AlphaKG binding stabilizes the homodimer.

The protein localises to the cell inner membrane. Its function is as follows. Chemotactic-signal transducers respond to changes in the concentration of attractants and repellents in the environment, transduce a signal from the outside to the inside of the cell, and facilitate sensory adaptation through the variation of the level of methylation. McpK is a chemoreceptor that specifically binds and mediates chemotaxis to alpha-ketoglutarate (alphaKG). This chain is Methyl-accepting chemotaxis protein McpK, found in Pseudomonas aeruginosa (strain ATCC 15692 / DSM 22644 / CIP 104116 / JCM 14847 / LMG 12228 / 1C / PRS 101 / PAO1).